The chain runs to 491 residues: 4,4'-diapolycopen-4-al dehydrogenase (491 aa).

Glutamate 208 is a catalytic residue.

It belongs to the carotenoid/retinoid oxidoreductase family. CrtN subfamily.

It carries out the reaction all-trans-4,4'-diapolycopen-4-al + A + H2O = all-trans-4,4'-diapolycopen-4-oate + AH2 + H(+). It participates in carotenoid biosynthesis. Functionally, involved in the biosynthesis of the major C30 carotenoid methyl 4'-[6-O-(acylglycosyl)oxy]-4,4'-diapolycopen-4-oic acid via 4,4'-diapolycopen-4-oic acid intermediate. Catalyzes the oxidation of 4,4'-diapolycopen-4-al to yield 4,4'-diapolycopen-4-oic acid. This is 4,4'-diapolycopen-4-al dehydrogenase from Metabacillus indicus (Bacillus indicus).